The sequence spans 231 residues: Probable septum site-determining protein MinC (231 aa).

It belongs to the MinC family. As to quaternary structure, interacts with MinD and FtsZ.

In terms of biological role, cell division inhibitor that blocks the formation of polar Z ring septums. Rapidly oscillates between the poles of the cell to destabilize FtsZ filaments that have formed before they mature into polar Z rings. Prevents FtsZ polymerization. This is Probable septum site-determining protein MinC from Baumannia cicadellinicola subsp. Homalodisca coagulata.